A 214-amino-acid chain; its full sequence is Endosomal/vacuolar adapter protein YPT35 (214 aa).

The disordered stretch occupies residues 1–63 (MNDKISFLPP…ATITRTRPRR (63 aa)). The PxP signature appears at 5 to 15 (ISFLPPEPIQL). Over residues 16-31 (LDEDSTEPELDIDSQQ) the composition is skewed to acidic residues. A compositionally biased stretch (low complexity) spans 38–58 (SASNSNDSTSHSNDCGATITR). Residues Ser65 and Ser66 each carry the phosphoserine modification. The 141-residue stretch at 73-213 (FQKAHVSDCT…IQFLEPSKRV (141 aa)) folds into the PX domain.

Belongs to the YPT35 family. Interacts with RBD2, YIF1, YIP1 and YIP4.

It is found in the endosome membrane. Its subcellular location is the vacuole membrane. Its function is as follows. Recruits the lipid transfer protein VPS13 to endosomal and vacuolar membranes. In Saccharomyces cerevisiae (strain YJM789) (Baker's yeast), this protein is Endosomal/vacuolar adapter protein YPT35 (YPT35).